A 537-amino-acid polypeptide reads, in one-letter code: Phosphoenolpyruvate carboxykinase (ATP) (537 aa).

Substrate-binding residues include Arg61, Tyr194, and Lys200. Residues Lys200, His219, and 235-243 contribute to the ATP site; that span reads GLSGTGKTT. The Mn(2+) site is built by Lys200 and His219. Asp256 is a binding site for Mn(2+). Glu284, Arg322, and Thr448 together coordinate ATP. Arg322 lines the substrate pocket.

The protein belongs to the phosphoenolpyruvate carboxykinase (ATP) family. Requires Mn(2+) as cofactor.

It is found in the cytoplasm. The catalysed reaction is oxaloacetate + ATP = phosphoenolpyruvate + ADP + CO2. Its pathway is carbohydrate biosynthesis; gluconeogenesis. In terms of biological role, involved in the gluconeogenesis. Catalyzes the conversion of oxaloacetate (OAA) to phosphoenolpyruvate (PEP) through direct phosphoryl transfer between the nucleoside triphosphate and OAA. The sequence is that of Phosphoenolpyruvate carboxykinase (ATP) from Bradyrhizobium sp. (strain ORS 278).